Reading from the N-terminus, the 266-residue chain is Undecaprenyl-diphosphatase (266 aa).

Helical transmembrane passes span 1-21 (MTLT…FLPI), 39-59 (QGLA…MIYF), 87-107 (WWVI…KAFI), 111-131 (ARSA…LWYA), 150-172 (LIVG…ITMT), 187-207 (FSFL…TLDL), 218-238 (ALIV…YLFL), and 244-264 (IGML…LLFV).

Belongs to the UppP family.

Its subcellular location is the cell inner membrane. The enzyme catalyses di-trans,octa-cis-undecaprenyl diphosphate + H2O = di-trans,octa-cis-undecaprenyl phosphate + phosphate + H(+). Its function is as follows. Catalyzes the dephosphorylation of undecaprenyl diphosphate (UPP). Confers resistance to bacitracin. This Pseudoalteromonas atlantica (strain T6c / ATCC BAA-1087) protein is Undecaprenyl-diphosphatase.